Here is a 349-residue protein sequence, read N- to C-terminus: MSTLDFNKIGKSYQSVRVLEGIDLQVTAGSRTAIVGPSGSGKTTLLRIIAGFETPDSGKVILQGNPLFDQSTHVPAHKRGIGFVPQDGALFPHFTAAGNIAYGLKGSKQDKARRIDKLMEMVALDRRLAQLWPHEISGGQQQRVALARALGQRPALMLLVEPFSTLDTALRASTRKAVAELLSQANIASILVTHDQSEALSFADQVAVMRAGKLVHVGAPQELYLRPIDEPTATFLGETLILSPNIEPGWPDCALGRVKVDDATRQGQTRIMLRPEQVTITPLPSAHHYPTHCLAKIVSIDFAGFISTLTLSIIEHNEIVAIKTISREGIHVGLMVDLTIMGQAHIFVE.

An ABC transporter domain is found at 4–236 (LDFNKIGKSY…PIDEPTATFL (233 aa)). Residue 36 to 43 (GPSGSGKT) coordinates ATP.

It belongs to the ABC transporter superfamily. Fe(3+) ion importer (TC 3.A.1.10) family. As to quaternary structure, the complex is composed of two ATP-binding proteins (FbpC), two transmembrane proteins (FbpB) and a solute-binding protein (FbpA).

Its subcellular location is the cell inner membrane. The enzyme catalyses Fe(3+)(out) + ATP + H2O = Fe(3+)(in) + ADP + phosphate + H(+). In terms of biological role, part of the ABC transporter complex FbpABC involved in Fe(3+) ions import. Responsible for energy coupling to the transport system. In Yersinia enterocolitica, this protein is Fe(3+) ions import ATP-binding protein FbpC.